The primary structure comprises 437 residues: Arginine biosynthesis bifunctional protein ArgJ, mitochondrial (437 aa).

The substrate site is built by Thr173, Lys200, Thr211, Glu297, Asn432, and Ser437. The active-site Nucleophile is the Thr211.

Belongs to the ArgJ family. In terms of assembly, heterodimer of an alpha and a beta chain. The alpha and beta chains are autoproteolytically processed from a single precursor protein within the mitochondrion.

The protein localises to the mitochondrion matrix. It catalyses the reaction N(2)-acetyl-L-ornithine + L-glutamate = N-acetyl-L-glutamate + L-ornithine. The catalysed reaction is L-glutamate + acetyl-CoA = N-acetyl-L-glutamate + CoA + H(+). It participates in amino-acid biosynthesis; L-arginine biosynthesis; L-ornithine and N-acetyl-L-glutamate from L-glutamate and N(2)-acetyl-L-ornithine (cyclic): step 1/1. It functions in the pathway amino-acid biosynthesis; L-arginine biosynthesis; N(2)-acetyl-L-ornithine from L-glutamate: step 1/4. In terms of biological role, catalyzes two activities which are involved in the cyclic version of arginine biosynthesis: the synthesis of acetylglutamate from glutamate and acetyl-CoA, and of ornithine by transacetylation between acetylornithine and glutamate. The protein is Arginine biosynthesis bifunctional protein ArgJ, mitochondrial of Zygosaccharomyces rouxii (strain ATCC 2623 / CBS 732 / NBRC 1130 / NCYC 568 / NRRL Y-229).